The chain runs to 279 residues: Shikimate dehydrogenase (NADP(+)) (279 aa).

Residues 17–19 and T64 contribute to the shikimate site; that span reads SQS. The active-site Proton acceptor is K68. N89 and D105 together coordinate shikimate. NADP(+) contacts are provided by residues 130–134 and L218; that span reads GAGGA. Y220 serves as a coordination point for shikimate. An NADP(+)-binding site is contributed by G242.

Belongs to the shikimate dehydrogenase family. Homodimer.

The catalysed reaction is shikimate + NADP(+) = 3-dehydroshikimate + NADPH + H(+). Its pathway is metabolic intermediate biosynthesis; chorismate biosynthesis; chorismate from D-erythrose 4-phosphate and phosphoenolpyruvate: step 4/7. Involved in the biosynthesis of the chorismate, which leads to the biosynthesis of aromatic amino acids. Catalyzes the reversible NADPH linked reduction of 3-dehydroshikimate (DHSA) to yield shikimate (SA). This Methylococcus capsulatus (strain ATCC 33009 / NCIMB 11132 / Bath) protein is Shikimate dehydrogenase (NADP(+)).